Here is a 100-residue protein sequence, read N- to C-terminus: uncharacterized protein (100 aa).

3 helical membrane passes run 9–29 (VYTY…SWVV), 41–61 (PYLI…ITAP), and 72–92 (SIPF…FLGI).

The protein localises to the membrane. This is an uncharacterized protein from Saccharomyces cerevisiae (strain ATCC 204508 / S288c) (Baker's yeast).